A 116-amino-acid polypeptide reads, in one-letter code: Phosphoribosyl-AMP cyclohydrolase (116 aa).

Aspartate 81 is a Mg(2+) binding site. Position 82 (cysteine 82) interacts with Zn(2+). Mg(2+) contacts are provided by aspartate 83 and aspartate 85. Zn(2+) is bound by residues cysteine 98 and cysteine 105.

Belongs to the PRA-CH family. Homodimer. The cofactor is Mg(2+). Zn(2+) is required as a cofactor.

The protein resides in the cytoplasm. It catalyses the reaction 1-(5-phospho-beta-D-ribosyl)-5'-AMP + H2O = 1-(5-phospho-beta-D-ribosyl)-5-[(5-phospho-beta-D-ribosylamino)methylideneamino]imidazole-4-carboxamide. The protein operates within amino-acid biosynthesis; L-histidine biosynthesis; L-histidine from 5-phospho-alpha-D-ribose 1-diphosphate: step 3/9. Its function is as follows. Catalyzes the hydrolysis of the adenine ring of phosphoribosyl-AMP. The protein is Phosphoribosyl-AMP cyclohydrolase of Mycolicibacterium vanbaalenii (strain DSM 7251 / JCM 13017 / BCRC 16820 / KCTC 9966 / NRRL B-24157 / PYR-1) (Mycobacterium vanbaalenii).